Reading from the N-terminus, the 644-residue chain is L-aspartate oxidase 2-a, chloroplastic (644 aa).

FAD contacts are provided by residues 94–97, Lys-116, 123–130, and Asp-294; these read SGIA and NTNYAQGG. Arg-369 functions as the Proton donor/acceptor in the catalytic mechanism. FAD-binding positions include Glu-454 and 470–471; that span reads SL.

Belongs to the FAD-dependent oxidoreductase 2 family. NadB subfamily. The cofactor is FAD.

The protein resides in the plastid. The protein localises to the chloroplast. It catalyses the reaction L-aspartate + O2 = iminosuccinate + H2O2. The protein operates within alkaloid biosynthesis; nicotine biosynthesis. Its pathway is cofactor biosynthesis; NAD(+) biosynthesis; iminoaspartate from L-aspartate (oxidase route): step 1/1. In terms of biological role, involved in the biosynthesis of pyridine alkaloid natural products, leading mainly to the production of anabasine, anatabine, nicotine and nornicotine, effective deterrents against herbivores with antiparasitic and pesticide properties (neurotoxins); nornicotine serves as the precursor in the synthesis of the carcinogen compound N'-nitrosonornicotine (NNN). Catalyzes the oxidation of L-aspartate to iminoaspartate. The protein is L-aspartate oxidase 2-a, chloroplastic of Nicotiana tabacum (Common tobacco).